Consider the following 330-residue polypeptide: Tyrosine-protein phosphatase yvh1 (330 aa).

The Tyrosine-protein phosphatase domain maps to 45-187; it reads NDLSEISKNL…LRVYFECNYQ (143 aa). Catalysis depends on cysteine 131, which acts as the Phosphocysteine intermediate.

Belongs to the protein-tyrosine phosphatase family. Non-receptor class dual specificity subfamily.

Its subcellular location is the cytoplasm. It is found in the nucleus. It catalyses the reaction O-phospho-L-tyrosyl-[protein] + H2O = L-tyrosyl-[protein] + phosphate. Functionally, may be directly involved in signal transduction and/or cell cycle regulation. It is necessary for maintaining growth rate or spore germination. Could show both activity toward tyrosine-protein phosphate as well as with serine-protein phosphate. This Schizosaccharomyces pombe (strain 972 / ATCC 24843) (Fission yeast) protein is Tyrosine-protein phosphatase yvh1 (yvh1).